The primary structure comprises 502 residues: Lysine--tRNA ligase (502 aa).

Positions 410 and 417 each coordinate Mg(2+).

Belongs to the class-II aminoacyl-tRNA synthetase family. Homodimer. Requires Mg(2+) as cofactor.

The protein resides in the cytoplasm. It carries out the reaction tRNA(Lys) + L-lysine + ATP = L-lysyl-tRNA(Lys) + AMP + diphosphate. The chain is Lysine--tRNA ligase from Photobacterium profundum (strain SS9).